Consider the following 326-residue polypeptide: Glyoxalase I (326 aa).

VOC domains follow at residues 22-167 and 182-322; these read LLNH…LITY and KFNH…VVPH. Histidine 25 serves as a coordination point for Zn(2+). Substrate is bound at residue arginine 29. Residue glutamate 89 coordinates Zn(2+). Substrate contacts are provided by residues asparagine 93, arginine 113, histidine 117, and 147–148; that span reads RQ. Histidine 117 contacts Zn(2+). Glutamate 163 serves as a coordination point for Zn(2+). Catalysis depends on proton donor/acceptor residues glutamate 163 and glutamate 318.

It belongs to the glyoxalase I family. As to quaternary structure, monomer. It depends on Zn(2+) as a cofactor.

It catalyses the reaction (R)-S-lactoylglutathione = methylglyoxal + glutathione. It participates in secondary metabolite metabolism; methylglyoxal degradation; (R)-lactate from methylglyoxal: step 1/2. Its function is as follows. Catalyzes the conversion of hemimercaptal, formed from methylglyoxal and glutathione, to S-lactoylglutathione. Can use gamma-glutamylcysteine as a substrate. The polypeptide is Glyoxalase I (Saccharomyces cerevisiae (strain ATCC 204508 / S288c) (Baker's yeast)).